A 488-amino-acid chain; its full sequence is Glutamyl-tRNA(Gln) amidotransferase subunit A (488 aa).

Catalysis depends on charge relay system residues K77 and S152. The active-site Acyl-ester intermediate is the S176.

This sequence belongs to the amidase family. GatA subfamily. As to quaternary structure, heterotrimer of A, B and C subunits.

The catalysed reaction is L-glutamyl-tRNA(Gln) + L-glutamine + ATP + H2O = L-glutaminyl-tRNA(Gln) + L-glutamate + ADP + phosphate + H(+). Its function is as follows. Allows the formation of correctly charged Gln-tRNA(Gln) through the transamidation of misacylated Glu-tRNA(Gln) in organisms which lack glutaminyl-tRNA synthetase. The reaction takes place in the presence of glutamine and ATP through an activated gamma-phospho-Glu-tRNA(Gln). This Streptococcus pyogenes serotype M49 (strain NZ131) protein is Glutamyl-tRNA(Gln) amidotransferase subunit A.